The primary structure comprises 150 residues: Ribosome-binding factor A (150 aa).

The interval 131 to 150 (LSHDDDEDGGADEAPRNGDE) is disordered.

The protein belongs to the RbfA family. In terms of assembly, monomer. Binds 30S ribosomal subunits, but not 50S ribosomal subunits or 70S ribosomes.

The protein resides in the cytoplasm. Its function is as follows. One of several proteins that assist in the late maturation steps of the functional core of the 30S ribosomal subunit. Associates with free 30S ribosomal subunits (but not with 30S subunits that are part of 70S ribosomes or polysomes). Required for efficient processing of 16S rRNA. May interact with the 5'-terminal helix region of 16S rRNA. This Brucella melitensis biotype 2 (strain ATCC 23457) protein is Ribosome-binding factor A.